Consider the following 89-residue polypeptide: UPF0175 protein APE_0276a (89 aa).

It belongs to the UPF0175 family.

The polypeptide is UPF0175 protein APE_0276a (Aeropyrum pernix (strain ATCC 700893 / DSM 11879 / JCM 9820 / NBRC 100138 / K1)).